The sequence spans 184 residues: ATP synthase subunit b, chloroplastic (184 aa).

The chain crosses the membrane as a helical span at residues 27-49 (LATNPINLSVVLGVLIFFGKGVL).

This sequence belongs to the ATPase B chain family. In terms of assembly, F-type ATPases have 2 components, F(1) - the catalytic core - and F(0) - the membrane proton channel. F(1) has five subunits: alpha(3), beta(3), gamma(1), delta(1), epsilon(1). F(0) has four main subunits: a(1), b(1), b'(1) and c(10-14). The alpha and beta chains form an alternating ring which encloses part of the gamma chain. F(1) is attached to F(0) by a central stalk formed by the gamma and epsilon chains, while a peripheral stalk is formed by the delta, b and b' chains.

The protein resides in the plastid. It localises to the chloroplast thylakoid membrane. In terms of biological role, f(1)F(0) ATP synthase produces ATP from ADP in the presence of a proton or sodium gradient. F-type ATPases consist of two structural domains, F(1) containing the extramembraneous catalytic core and F(0) containing the membrane proton channel, linked together by a central stalk and a peripheral stalk. During catalysis, ATP synthesis in the catalytic domain of F(1) is coupled via a rotary mechanism of the central stalk subunits to proton translocation. Component of the F(0) channel, it forms part of the peripheral stalk, linking F(1) to F(0). This Oenothera elata subsp. hookeri (Hooker's evening primrose) protein is ATP synthase subunit b, chloroplastic.